The chain runs to 331 residues: Isopenicillin N synthase (331 aa).

Isopenicillin N is bound by residues Arg-87, Tyr-91, Ser-183, and Tyr-189. N-[(5S)-5-amino-5-carboxypentanoyl]-L-cysteinyl-D-valine is bound by residues Arg-87, Tyr-91, Ser-183, Tyr-189, His-214, and Asp-216. Residues 176-288 (KPDDTLASVV…RQSLPFFVNL (113 aa)) form the Fe2OG dioxygenase domain. Fe(2+) is bound by residues His-214, Asp-216, and His-270. Arg-279 is a 2-oxoglutarate binding site. Ser-281 contacts isopenicillin N. Ser-281 provides a ligand contact to N-[(5S)-5-amino-5-carboxypentanoyl]-L-cysteinyl-D-valine.

It belongs to the iron/ascorbate-dependent oxidoreductase family. In terms of assembly, monomer. Fe(2+) serves as cofactor.

It is found in the cytoplasm. The protein resides in the cytosol. The enzyme catalyses N-[(5S)-5-amino-5-carboxypentanoyl]-L-cysteinyl-D-valine + O2 = isopenicillin N + 2 H2O. It participates in antibiotic biosynthesis; penicillin G biosynthesis; penicillin G from L-alpha-aminoadipate and L-cysteine and L-valine: step 2/3. Functionally, isopenicillin N synthase; part of the gene cluster that mediates the biosynthesis of penicillin, the world's most important antibiotic. IpnA catalyzes the cyclization of the tripeptide N-[(5S)-5-amino-5-carboxypentanoyl]-L-cysteinyl-D-valine (LLD-ACV or ACV) to form isopenicillin N (IPN) that contains the beta-lactam nucleus. The penicillin biosynthesis occurs via 3 enzymatic steps, the first corresponding to the production of the tripeptide N-[(5S)-5-amino-5-carboxypentanoyl]-L-cysteinyl-D-valine (LLD-ACV or ACV) by the NRPS acvA. The tripeptide ACV is then cyclized to isopenicillin N (IPN) by the isopenicillin N synthase ipnA that forms the beta-lactam nucleus. Finally, the alpha-aminoadipyl side chain is exchanged for phenylacetic acid by the isopenicillin N acyltransferase penDE to yield penicillin in the peroxisomal matrix. The chain is Isopenicillin N synthase from Emericella nidulans (strain FGSC A4 / ATCC 38163 / CBS 112.46 / NRRL 194 / M139) (Aspergillus nidulans).